The sequence spans 117 residues: Small ribosomal subunit protein bS16 (117 aa).

The span at 81-90 (LKKRPNRNNP) shows a compositional bias: basic residues. The interval 81 to 117 (LKKRPNRNNPHKGQPGKKAQERISAAKQVAEAESAPV) is disordered.

Belongs to the bacterial ribosomal protein bS16 family.

This Bartonella quintana (strain Toulouse) (Rochalimaea quintana) protein is Small ribosomal subunit protein bS16.